Consider the following 146-residue polypeptide: D-aminoacyl-tRNA deacylase (146 aa).

Positions 137 to 138 (GP) match the Gly-cisPro motif, important for rejection of L-amino acids motif.

The protein belongs to the DTD family. In terms of assembly, homodimer.

It is found in the cytoplasm. The catalysed reaction is glycyl-tRNA(Ala) + H2O = tRNA(Ala) + glycine + H(+). The enzyme catalyses a D-aminoacyl-tRNA + H2O = a tRNA + a D-alpha-amino acid + H(+). Its function is as follows. An aminoacyl-tRNA editing enzyme that deacylates mischarged D-aminoacyl-tRNAs. Also deacylates mischarged glycyl-tRNA(Ala), protecting cells against glycine mischarging by AlaRS. Acts via tRNA-based rather than protein-based catalysis; rejects L-amino acids rather than detecting D-amino acids in the active site. By recycling D-aminoacyl-tRNA to D-amino acids and free tRNA molecules, this enzyme counteracts the toxicity associated with the formation of D-aminoacyl-tRNA entities in vivo and helps enforce protein L-homochirality. The protein is D-aminoacyl-tRNA deacylase of Bacillus cytotoxicus (strain DSM 22905 / CIP 110041 / 391-98 / NVH 391-98).